The primary structure comprises 77 residues: Large ribosomal subunit protein bL28 (77 aa).

Positions 1–25 (MARVCQVTGKAPMSGNNVSHANNKT) are disordered.

It belongs to the bacterial ribosomal protein bL28 family.

This is Large ribosomal subunit protein bL28 from Paraburkholderia phytofirmans (strain DSM 17436 / LMG 22146 / PsJN) (Burkholderia phytofirmans).